The primary structure comprises 118 residues: Large ribosomal subunit protein uL18 (118 aa).

It belongs to the universal ribosomal protein uL18 family. Part of the 50S ribosomal subunit; part of the 5S rRNA/L5/L18/L25 subcomplex. Contacts the 5S and 23S rRNAs.

This is one of the proteins that bind and probably mediate the attachment of the 5S RNA into the large ribosomal subunit, where it forms part of the central protuberance. The chain is Large ribosomal subunit protein uL18 from Rhizorhabdus wittichii (strain DSM 6014 / CCUG 31198 / JCM 15750 / NBRC 105917 / EY 4224 / RW1) (Sphingomonas wittichii).